The following is a 296-amino-acid chain: Cobalamin trafficking protein CblD (296 aa).

The transit peptide at M1–G38 directs the protein to the mitochondrion. Residue K203 is modified to N6-acetyllysine.

Heterodimer with MMACHC. Forms a multiprotein complex with MMACHC, MTR and MTRR.

It is found in the cytoplasm. The protein localises to the mitochondrion. Involved in cobalamin metabolism and trafficking. Plays a role in regulating the biosynthesis and the proportion of two coenzymes, methylcob(III)alamin (MeCbl) and 5'-deoxyadenosylcobalamin (AdoCbl). Promotes oxidation of cob(II)alamin bound to MMACHC. The processing of cobalamin in the cytosol occurs in a multiprotein complex composed of at least MMACHC, MMADHC, MTRR (methionine synthase reductase) and MTR (methionine synthase) which may contribute to shuttle safely and efficiently cobalamin towards MTR in order to produce methionine. This Mus musculus (Mouse) protein is Cobalamin trafficking protein CblD.